The sequence spans 861 residues: Protein argonaute-4 (861 aa).

One can recognise a PAZ domain in the interval 219–338 (PIIEFMCEVL…LPLEVCNIVA (120 aa)). Positions 509–820 (LIVVILPGKT…VAFRARYHLV (312 aa)) constitute a Piwi domain. Positions 825–846 (DSAEGSHVSGQSNGRDPQALAK) are disordered.

The protein belongs to the argonaute family. Ago subfamily. In terms of assembly, interacts with EIF4B, IMP8, PRMT5, TNRC6A and TNRC6B. Interacts with ZFP36. Post-translationally, ubiquitinated on surface-exposed lysines by a SCF-like E3 ubiquitin-protein ligase complex containing ZSWIM8 during target-directed microRNA degradation (TDMD), a process that mediates degradation of microRNAs (miRNAs). Ubiquitination by the SCF-like E3 ubiquitin-protein ligase complex containing ZSWIM8 leads to its subsequent degradation, thereby exposing miRNAs for degradation. ZSWIM8 recognizes and binds AGO4 when it is engaged with a TDMD target.

It localises to the cytoplasm. Its subcellular location is the P-body. Required for RNA-mediated gene silencing (RNAi). Binds to short RNAs such as microRNAs (miRNAs) and represses the translation of mRNAs which are complementary to them. Lacks endonuclease activity and does not appear to cleave target mRNAs. The polypeptide is Protein argonaute-4 (Ago4) (Mus musculus (Mouse)).